We begin with the raw amino-acid sequence, 143 residues long: Large ribosomal subunit protein uL15 (143 aa).

The tract at residues 1–48 (MRLNTISPSKGAKHSSKRLGRGIGSGLGKTSGRGHKGQKARSGCSIHR) is disordered. The span at 11–20 (GAKHSSKRLG) shows a compositional bias: basic residues. Residues 21-31 (RGIGSGLGKTS) show a composition bias toward gly residues.

The protein belongs to the universal ribosomal protein uL15 family. In terms of assembly, part of the 50S ribosomal subunit.

Binds to the 23S rRNA. This is Large ribosomal subunit protein uL15 from Baumannia cicadellinicola subsp. Homalodisca coagulata.